Reading from the N-terminus, the 84-residue chain is Small ribosomal subunit protein uS17 (84 aa).

The protein belongs to the universal ribosomal protein uS17 family. Part of the 30S ribosomal subunit.

One of the primary rRNA binding proteins, it binds specifically to the 5'-end of 16S ribosomal RNA. This chain is Small ribosomal subunit protein uS17, found in Clostridium perfringens (strain SM101 / Type A).